Consider the following 43-residue polypeptide: Neurotrophin-3 (43 aa).

Belongs to the NGF-beta family.

It is found in the secreted. Its function is as follows. Seems to promote the survival of visceral and proprioceptive sensory neurons. The chain is Neurotrophin-3 (ntf3) from Raja clavata (Thornback ray).